A 390-amino-acid chain; its full sequence is ATP-sensitive inward rectifier potassium channel 11 (390 aa).

At 1–65 (MLSRKGIIPE…LQDVFTTLVD (65 aa)) the chain is on the cytoplasmic side. 2 residues coordinate ATP: Asn48 and Arg50. The chain crosses the membrane as a helical span at residues 66–92 (LKWPHTLLIFTMSFLCSWLLFAMAWWL). Over 93–116 (IAFAHGDLAPSEGTAEPCVTSIHS) the chain is Extracellular. Cys110 and Cys142 are oxidised to a cystine. Residues 117 to 133 (FSSAFLFSIEVQVTIGF) constitute an intramembrane region (discontinuously helical; Pore-forming). 2 residues coordinate K(+): Thr130 and Phe133. Residues 130 to 135 (TIGFGG) carry the Selectivity filter motif. At 134-142 (GGRMVTEEC) the chain is on the extracellular side. The chain crosses the membrane as a helical span at residues 143–171 (PLAILILIVQNIVGLMINAIMLGCIFMKT). The Cytoplasmic portion of the chain corresponds to 172–390 (AQAHRRAETL…KFSISPDSLS (219 aa)). Residue Arg176 coordinates a 1,2-diacyl-sn-glycero-3-phospho-(1D-myo-inositol-4,5-bisphosphate). Tyr330 serves as a coordination point for ATP. Thr341 is subject to Phosphothreonine; by MAPK1. Phosphoserine; by MAPK1 is present on Ser385.

The protein belongs to the inward rectifier-type potassium channel (TC 1.A.2.1) family. KCNJ11 subfamily. In terms of assembly, homotetramer; the homotetramer binds four ATP molecules (one ATP per subunit). Forms an heterooctamer with ABCC8/SUR1; one KCNJ11 homotetramer interacts with four ABCC8/SUR1 molecules. Interacts with ABCC9/SUR2. Phosphorylation by MAPK1 results in changes in channel gating that destabilize the closed states and reduce the ATP sensitivity.

It is found in the membrane. The catalysed reaction is K(+)(in) = K(+)(out). Its activity is regulated as follows. KATP channels are regulated by cytoplasmic ATP/ADP ratios; ATP inhibits the channel by closing the pore, while ADP activates the channel. Activated by phosphatidylinositol 4,5-biphosphate (PtdIns(4,5)P2). In terms of biological role, inward rectifier potassium channel that forms the pore of ATP-sensitive potassium channels (KATP), regulating potassium permeability as a function of cytoplasmic ATP and ADP concentrations in many different cells. Inward rectifier potassium channels are characterized by a greater tendency to allow potassium to flow into the cell rather than out of it. Their voltage dependence is regulated by the concentration of extracellular potassium; as external potassium is raised, the voltage range of the channel opening shifts to more positive voltages. The inward rectification is mainly due to the blockage of outward current by internal magnesium. Can be blocked by extracellular barium. In pancreatic cells, it forms KATP channels with ABCC8/SUR1. Can form cardiac and smooth muscle-type KATP channels with ABCC9. The sequence is that of ATP-sensitive inward rectifier potassium channel 11 (KCNJ11) from Homo sapiens (Human).